A 179-amino-acid polypeptide reads, in one-letter code: Large ribosomal subunit protein uL6 (179 aa).

Belongs to the universal ribosomal protein uL6 family. As to quaternary structure, part of the 50S ribosomal subunit.

Its function is as follows. This protein binds to the 23S rRNA, and is important in its secondary structure. It is located near the subunit interface in the base of the L7/L12 stalk, and near the tRNA binding site of the peptidyltransferase center. This is Large ribosomal subunit protein uL6 from Chlorobaculum tepidum (strain ATCC 49652 / DSM 12025 / NBRC 103806 / TLS) (Chlorobium tepidum).